Consider the following 333-residue polypeptide: Protein VTE6, chloroplastic (333 aa).

The transit peptide at 1 to 65 (MATISSTLLL…SRADGATAAA (65 aa)) directs the protein to the chloroplast. 6 helical membrane-spanning segments follow: residues 94–114 (LLIFVLGSPLLVTGLSASGIA), 126–146 (AYGSAGFLLVAAYFVIGTAAT), 171–191 (VIGSSAAGCVCAFLSIYQVGG), 248–268 (TLAGLLASFFLASVGCFLGQI), 274–294 (AVCVLASQIANLGESIIGASF), and 307–327 (VVNVINISLGSIVAILMQQFI).

It belongs to the TMEM19 family.

It localises to the plastid. It is found in the chloroplast membrane. The catalysed reaction is phytyl phosphate + a ribonucleoside 5'-triphosphate = phytyl diphosphate + a ribonucleoside 5'-diphosphate. It carries out the reaction phytyl phosphate + CTP = phytyl diphosphate + CDP. It participates in cofactor biosynthesis; tocopherol biosynthesis. Functionally, phytyl-phosphate kinase catalyzing the conversion of phytyl-monophosphate to phytyl-diphosphate. Involved in the activation and reutilization of phytol from chlorophyll degradation in plant metabolism, including tocopherol (vitamin E) biosynthesis. Involved in the biosynthesis of phylloquinone (vitamin K), which is required for the photosystem I (PSI) complex stability. This Arabidopsis thaliana (Mouse-ear cress) protein is Protein VTE6, chloroplastic.